A 116-amino-acid polypeptide reads, in one-letter code: Ribosome-binding factor A (116 aa).

The protein belongs to the RbfA family. As to quaternary structure, monomer. Binds 30S ribosomal subunits, but not 50S ribosomal subunits or 70S ribosomes.

Its subcellular location is the cytoplasm. Functionally, one of several proteins that assist in the late maturation steps of the functional core of the 30S ribosomal subunit. Associates with free 30S ribosomal subunits (but not with 30S subunits that are part of 70S ribosomes or polysomes). Required for efficient processing of 16S rRNA. May interact with the 5'-terminal helix region of 16S rRNA. In Staphylococcus epidermidis (strain ATCC 35984 / DSM 28319 / BCRC 17069 / CCUG 31568 / BM 3577 / RP62A), this protein is Ribosome-binding factor A.